Here is a 131-residue protein sequence, read N- to C-terminus: Antitoxin MqsA (131 aa).

Zn(2+) contacts are provided by Cys-3, Cys-6, Cys-37, and Cys-40. An HTH cro/C1-type domain is found at 74-127 (IVKVRKKLSLTQKEASEIFGGGVNAFSRYEKGNAQPHPSTIKLLRVLDKHPELL). Positions 85-104 (QKEASEIFGGGVNAFSRYEK) form a DNA-binding region, H-T-H motif.

As to quaternary structure, homodimer. Crystallizes as a heterotetramer with MqsA, MqsR-MqsA(2)-MqsR. Purifies as a probable heterohexamer of 2 MqsR dimers and 1 MqsA dimer. Binds promoter DNA as a dimer. When the 2 dissociate the MsqR mRNA interferase becomes active. Requires Zn(2+) as cofactor. Post-translationally, degraded in the presence of oxidative stress, maybe by the Lon and/or ClpX proteases.

In terms of biological role, antitoxin component of a type II toxin-antitoxin (TA) system. Labile antitoxin that binds to the MqsR mRNA interferase toxin and neutralizes its endoribonuclease activity. Overexpression prevents MqsR-mediated cessation of cell growth and inhibition of cell proliferation. Initially reported to act as a cotranscription factor with MqsA. Following further experiments, the MqsR-MqsA complex does not bind DNA and all reported data are actually due to a small fraction of free MqsA alone binding DNA. Addition of MqsR to a preformed MqsA-promoter DNA complex causes dissociation of the MqsA-DNA complex, probably causing derepression of MqsA-repressed transcripts. MqsA binds to 2 palindromes in the promoter region of the mqsRA operon activating its transcription. Binds to other promoters, inducing mcbR and spy and repressing cspD among others. Binds to and represses the rpoS promoter, the master stress regulator, resulting in decreased cyclic-di-GMP, reduced stress resistance, increased cell motility and decreased biofilm formation; in these experiments 5 TA systems are missing (lacks MazEF, RelEB, ChpB, YoeB-YefM, YafQ-DinJ). An earlier study showed overexpression alone increases biofilm formation, perhaps by repressing cspD; in these experiments the 5 TA systems are present. Represses the csgD promoter. In the presence of stress, when this protein is degraded, the promoters it represses are derepressed, leading to biofilm formation. This TA system mediates cell growth during bile acid deoxycholate stress by degrading mRNA for probable deoxycholate-binding protein YgiS; bile acid detergents such as deoxycholate are important for host defense against bacterial growth in the gall bladder and duodenum. This chain is Antitoxin MqsA, found in Escherichia coli (strain K12).